Here is a 114-residue protein sequence, read N- to C-terminus: MICOS complex subunit MIC12 (114 aa).

A helical transmembrane segment spans residues 4–26 (IAKLGSFTLVSGVVATSCYYYFI).

This sequence belongs to the MICOS complex subunit Mic12 family. As to quaternary structure, component of the mitochondrial contact site and cristae organizing system (MICOS) complex.

The protein resides in the mitochondrion inner membrane. In terms of biological role, component of the MICOS complex, a large protein complex of the mitochondrial inner membrane that plays crucial roles in the maintenance of crista junctions, inner membrane architecture, and formation of contact sites to the outer membrane. This chain is MICOS complex subunit MIC12 (AIM5), found in Candida glabrata (strain ATCC 2001 / BCRC 20586 / JCM 3761 / NBRC 0622 / NRRL Y-65 / CBS 138) (Yeast).